The following is a 546-amino-acid chain: Probable ATP-dependent RNA helicase DDX56 (546 aa).

The short motif at 7 to 35 is the Q motif element; it reads LGFEHMGLDHRLLQAVTDLGWSRPTLIQE. The 181-residue stretch at 38–218 folds into the Helicase ATP-binding domain; that stretch reads IPLALEGKDL…ELVLHNPVTL (181 aa). Residue 51–58 coordinates ATP; sequence ARTGSGKT. At serine 126 the chain carries Phosphoserine. Residue threonine 141 is modified to Phosphothreonine. Positions 166–169 match the DEAD box motif; the sequence is DEAD. Residues 230-424 enclose the Helicase C-terminal domain; the sequence is QLQQFQVVCE…PYQFHMEEIE (195 aa). Disordered stretches follow at residues 323 to 342 and 504 to 546; these read PVKG…SDPE and LVHP…AAPS. Basic residues predominate over residues 505-524; that stretch reads VHPHKKRKKPLASKKAKKAK. Serine 531 is subject to Phosphoserine.

This sequence belongs to the DEAD box helicase family. DDX56/DBP9 subfamily. May form homooligomeric complexes. Interacts with IRF3. Interacts with OCT4 and POU5F1.

It localises to the nucleus. Its subcellular location is the nucleolus. The enzyme catalyses ATP + H2O = ADP + phosphate + H(+). In terms of biological role, nucleolar RNA helicase that plays a role in various biological processes including innate immunity, ribosome biogenesis or nucleolus organization. Plays an essential role in maintaining nucleolar integrity in planarian stem cells. Maintains embryonic stem cells proliferation by conventional regulation of ribosome assembly and interaction with OCT4 and POU5F1 complex. Regulates antiviral innate immunity by inhibiting the virus-triggered signaling nuclear translocation of IRF3. Mechanistically, acts by disrupting the interaction between IRF3 and importin IPO5. May play a role in later stages of the processing of the pre-ribosomal particles leading to mature 60S ribosomal subunits. Has intrinsic ATPase activity. The sequence is that of Probable ATP-dependent RNA helicase DDX56 (DDX56) from Bos taurus (Bovine).